Here is a 275-residue protein sequence, read N- to C-terminus: Lectin (275 aa).

A signal peptide spans 1–30 (MASLQTQMISFYLIFLSILLTTIFFFKVNS). D111 and G129 together coordinate D-glucose. Mn(2+) is bound by residues E149 and D151. Ca(2+) is bound by residues D151, F153, N155, and D159. 2 residues coordinate Mn(2+): D159 and H166. Positions 211 to 217 (NSLEEEN) are excised as a propeptide. The D-glucose site is built by G246 and A247. Residues 270-275 (KQAADA) constitute a propeptide that is removed on maturation.

The protein belongs to the leguminous lectin family. As to quaternary structure, heterotetramer of two alpha and two beta chains. Post-translationally, the mature form consists of two chains, alpha and beta, produced by cleavage of the immature protein. These remain cleaved, yet fold together to form one subunit.

In terms of biological role, D-mannose specific lectin. The sequence is that of Lectin from Lens culinaris subsp. culinaris (Cultivated lentil).